A 491-amino-acid chain; its full sequence is Phosphatidylglycerol--prolipoprotein diacylglyceryl transferase (491 aa).

3 consecutive transmembrane segments (helical) span residues 24–44 (IPLR…IWWG), 58–78 (VLDV…AYHV), and 98–118 (IWQG…GAWI). R146 is a binding site for a 1,2-diacyl-sn-glycero-3-phospho-(1'-sn-glycerol). Transmembrane regions (helical) follow at residues 192 to 212 (IVHP…IALV) and 256 to 276 (INNF…VFAT). The span at 309 to 323 (NGPAEPGATASTATD) shows a compositional bias: low complexity. A disordered region spans residues 309–491 (NGPAEPGATA…DRVDSGENDA (183 aa)). The span at 347 to 360 (KGDRGTADAADTAK) shows a compositional bias: basic and acidic residues. 3 stretches are compositionally biased toward low complexity: residues 361 to 387 (DASA…GSSD), 394 to 406 (AVKA…AAEK), and 415 to 438 (AGEA…SAKS). Over residues 453–462 (NESESTRDNE) the composition is skewed to basic and acidic residues. Residues 463–481 (STSAGTAASATGSAGAGAT) are compositionally biased toward low complexity. A compositionally biased stretch (basic and acidic residues) spans 482–491 (DRVDSGENDA).

It belongs to the Lgt family.

It localises to the cell membrane. It catalyses the reaction L-cysteinyl-[prolipoprotein] + a 1,2-diacyl-sn-glycero-3-phospho-(1'-sn-glycerol) = an S-1,2-diacyl-sn-glyceryl-L-cysteinyl-[prolipoprotein] + sn-glycerol 1-phosphate + H(+). It participates in protein modification; lipoprotein biosynthesis (diacylglyceryl transfer). Catalyzes the transfer of the diacylglyceryl group from phosphatidylglycerol to the sulfhydryl group of the N-terminal cysteine of a prolipoprotein, the first step in the formation of mature lipoproteins. The chain is Phosphatidylglycerol--prolipoprotein diacylglyceryl transferase from Nocardia farcinica (strain IFM 10152).